Consider the following 547-residue polypeptide: MRQKRKGDLSPAQLMMLTIGDVIKQLIEAHEQGKDIDLNKVKTRTAAKYGLSAQPRLVDIIAAVPPQYRKVLVPKLKAKPIRTASGIAVVAVMCKPHRCPHISFTGNICVYCPGGPDSDFEYSTQSYTGYEPTSMRAIRARYDPYLQTRHRIEQLKQLGHSVDKVEFIVMGGTFMALPEEYRDYFIRNLHDALSGHTSNNIYEAVKYSERSLTKCIGITIETRPDYCMKRHLSDMLTYGCTRLEIGVQSVYEDVARDTNRGHTVKAVCESFHLAKDSGFKVVAHMMPDLPNVGLERDIEQFTEFFENPAFRPDGLKLYPTLVIRGTGLYELWKSGRYKSYSPSDLIELVARILALVPPWTRVYRVQRDIPMPLVSSGVEHGNLRELAFARMKDLGIQCRDVRTREVGIQEIHHKVRPYQVELVRRDYVANGGWETFLSYEDPDQDILIGLLRLRKCSEETFRFELVGGVSIVRELHVYGSVVPVSSRDPTKFQHQGFGMLLMEEAERIAREEHGSGKIAVISGVGTRNYYRKIGYRLQGPYMVKTLE.

Residues 82–372 (RTASGIAVVA…YRVQRDIPMP (291 aa)) form the Radical SAM core domain. Cys-99, Cys-109, and Cys-112 together coordinate [4Fe-4S] cluster. Ser-161 carries the post-translational modification Phosphoserine. An acetyl-CoA-binding site is contributed by Lys-164. Tyr-202 bears the Phosphotyrosine mark. Lys-229 carries the N6-methyllysine modification. Tyr-251 bears the Phosphotyrosine mark. The N-acetyltransferase domain occupies 396 to 547 (IQCRDVRTRE…QGPYMVKTLE (152 aa)). Acetyl-CoA contacts are provided by residues 474–477 (ELHV), 497–499 (FGM), and Tyr-530.

Belongs to the ELP3 family. As to quaternary structure, component of the elongator complex which consists of ELP1, ELP2, ELP3, ELP4, ELP5 and ELP6. ELP1, ELP2 and ELP3 form the elongator core complex. Interacts with alpha-tubulin. [4Fe-4S] cluster serves as cofactor. Post-translationally, tyrosine-phosphorylated; phosphorylation on Tyr-202 does not affect elongator complex integrity or ELP3 protein stability. Also serine/threonine-phosphorylated.

Its subcellular location is the cytoplasm. It localises to the nucleus. The catalysed reaction is uridine(34) in tRNA + acetyl-CoA + S-adenosyl-L-methionine + H2O = 5-(carboxymethyl)uridine(34) in tRNA + 5'-deoxyadenosine + L-methionine + CoA + 2 H(+). It participates in tRNA modification; 5-methoxycarbonylmethyl-2-thiouridine-tRNA biosynthesis. In terms of biological role, catalytic tRNA acetyltransferase subunit of the elongator complex which is required for multiple tRNA modifications, including mcm5U (5-methoxycarbonylmethyl uridine), mcm5s2U (5-methoxycarbonylmethyl-2-thiouridine), and ncm5U (5-carbamoylmethyl uridine). In the elongator complex, acts as a tRNA uridine(34) acetyltransferase by mediating formation of carboxymethyluridine in the wobble base at position 34 in tRNAs. May also act as a protein lysine acetyltransferase by mediating acetylation of target proteins; such activity is however unclear in vivo and recent evidences suggest that ELP3 primarily acts as a tRNA acetyltransferase. Involved in neurogenesis: regulates the migration and branching of projection neurons in the developing cerebral cortex, through a process depending on alpha-tubulin acetylation. Required for acetylation of GJA1 in the developing cerebral cortex. This Bos taurus (Bovine) protein is Elongator complex protein 3.